The sequence spans 632 residues: Golgin subfamily A member 8M (632 aa).

The segment at 1–77 (MAEETQHNKL…SSATLKDLES (77 aa)) is disordered. The span at 38-50 (TNGSIPQTATSGG) shows a compositional bias: polar residues. Coiled coils occupy residues 86-154 (LDSR…HMKR) and 209-421 (KLEQ…SLMA). The span at 352–362 (KQEERIQEQHK) shows a compositional bias: basic and acidic residues. Disordered regions lie at residues 352-384 (KQEE…NKST), 422-456 (LPGE…REAM), and 505-524 (DAAL…DEGE). Positions 508–520 (LGGGHHQAGAQGG) are enriched in gly residues.

The protein belongs to the GOLGA8 family.

The sequence is that of Golgin subfamily A member 8M from Homo sapiens (Human).